Consider the following 309-residue polypeptide: Heme-dependent oxidative N-demethylase beta subunit (309 aa).

The FAD-binding FR-type domain occupies 2–103; sequence STLLDVRVAA…SPPANLFPLH (102 aa). One can recognise a 2Fe-2S ferredoxin-type domain in the interval 226–309; that stretch reads FRVELARSGQ…GCGSPILLDL (84 aa). [2Fe-2S] cluster-binding residues include Cys-260, Cys-265, Cys-268, and Cys-296.

Belongs to the PDR/VanB family. As to quaternary structure, the heme-dependent oxidative N-demethylase (HODM) is a heterotetramer composed of a catalytic alpha subunit, a FMN/2Fe-2S-dependent oxidoreductase beta subunit, a gamma subunit with putative aminotransferase activity, and a delta subunit of unknown function. It depends on [2Fe-2S] cluster as a cofactor. FMN is required as a cofactor.

Component of the heme-dependent oxidative N-demethylase (HODM) enzyme, that catalyzes the NADPH-dependent oxidation of dimethylamine (DMA) to methylamine (MA) and formaldehyde. Functions in bacterial methylated amine catabolism, linking alkylamine oxidation to the tetrahydrofolate C1 pool. The beta subunit of HODM binds FMN and a 2Fe-2S cluster, and likely reduces the ferric heme iron of the alpha subunit to ferrous using NADPH. The sequence is that of Heme-dependent oxidative N-demethylase beta subunit from Ectopseudomonas mendocina (strain ymp) (Pseudomonas mendocina).